A 328-amino-acid polypeptide reads, in one-letter code: GMP reductase (328 aa).

Cys-176 (thioimidate intermediate) is an active-site residue. An NADP(+)-binding site is contributed by 205–228; it reads IIADGGIRTHGDIAKSIRFGASMI.

This sequence belongs to the IMPDH/GMPR family. GuaC type 2 subfamily.

The enzyme catalyses IMP + NH4(+) + NADP(+) = GMP + NADPH + 2 H(+). Catalyzes the irreversible NADPH-dependent deamination of GMP to IMP. It functions in the conversion of nucleobase, nucleoside and nucleotide derivatives of G to A nucleotides, and in maintaining the intracellular balance of A and G nucleotides. The protein is GMP reductase of Streptococcus pneumoniae serotype 2 (strain D39 / NCTC 7466).